Consider the following 361-residue polypeptide: Probable dual-specificity RNA methyltransferase RlmN (361 aa).

The Proton acceptor role is filled by glutamate 91. Residues 97–329 enclose the Radical SAM core domain; it reads QHYGLSVCVT…KKKGGNCVVR (233 aa). A disulfide bridge links cysteine 104 with cysteine 340. The [4Fe-4S] cluster site is built by cysteine 111, cysteine 115, and cysteine 118. Residues 163-164, serine 195, 218-220, and asparagine 296 each bind S-adenosyl-L-methionine; these read GE and SLH. The active-site S-methylcysteine intermediate is cysteine 340.

The protein belongs to the radical SAM superfamily. RlmN family. [4Fe-4S] cluster serves as cofactor.

It localises to the cytoplasm. The enzyme catalyses adenosine(2503) in 23S rRNA + 2 reduced [2Fe-2S]-[ferredoxin] + 2 S-adenosyl-L-methionine = 2-methyladenosine(2503) in 23S rRNA + 5'-deoxyadenosine + L-methionine + 2 oxidized [2Fe-2S]-[ferredoxin] + S-adenosyl-L-homocysteine. It catalyses the reaction adenosine(37) in tRNA + 2 reduced [2Fe-2S]-[ferredoxin] + 2 S-adenosyl-L-methionine = 2-methyladenosine(37) in tRNA + 5'-deoxyadenosine + L-methionine + 2 oxidized [2Fe-2S]-[ferredoxin] + S-adenosyl-L-homocysteine. Functionally, specifically methylates position 2 of adenine 2503 in 23S rRNA and position 2 of adenine 37 in tRNAs. This is Probable dual-specificity RNA methyltransferase RlmN from Streptococcus pneumoniae (strain P1031).